The sequence spans 69 residues: Small, acid-soluble spore protein I (69 aa).

This sequence belongs to the SspI family.

Its subcellular location is the spore core. The protein is Small, acid-soluble spore protein I of Bacillus anthracis (strain A0248).